Here is a 319-residue protein sequence, read N- to C-terminus: Super small secreted glycoprotein (319 aa).

A signal peptide spans 1–32 (MGGLSLLQLPRDKFRKSSFFVWVIILFQKAFS). N-linked (GlcNAc...) asparagine; by host glycosylation occurs at Asn-40. 2 disulfide bridges follow: Cys-108–Cys-135 and Cys-121–Cys-147. N-linked (GlcNAc...) asparagine; by host glycosylation is found at Asn-204, Asn-208, Asn-238, Asn-257, and Asn-268.

This sequence belongs to the filoviruses glycoprotein family.

It localises to the secreted. This Sudan ebolavirus (strain Human/Uganda/Gulu/2000) (SEBOV) protein is Super small secreted glycoprotein (GP).